The sequence spans 87 residues: Large ribosomal subunit protein bL27c (87 aa).

A disordered region spans residues 1-20 (MAHKKGSGSTKNGRDSRSQR).

It belongs to the bacterial ribosomal protein bL27 family.

The protein resides in the plastid. It localises to the chloroplast. This chain is Large ribosomal subunit protein bL27c, found in Gracilaria tenuistipitata var. liui (Red alga).